Reading from the N-terminus, the 195-residue chain is Small ribosomal subunit protein uS4 (195 aa).

The S4 RNA-binding domain occupies 88-150 (RRLENVVYRL…SKNVELIKLA (63 aa)).

The protein belongs to the universal ribosomal protein uS4 family. As to quaternary structure, part of the 30S ribosomal subunit. Contacts protein S5. The interaction surface between S4 and S5 is involved in control of translational fidelity.

Functionally, one of the primary rRNA binding proteins, it binds directly to 16S rRNA where it nucleates assembly of the body of the 30S subunit. Its function is as follows. With S5 and S12 plays an important role in translational accuracy. The protein is Small ribosomal subunit protein uS4 of Fusobacterium nucleatum subsp. nucleatum (strain ATCC 25586 / DSM 15643 / BCRC 10681 / CIP 101130 / JCM 8532 / KCTC 2640 / LMG 13131 / VPI 4355).